Here is a 547-residue protein sequence, read N- to C-terminus: DNA ligase (547 aa).

ATP is bound at residue Glu-244. Lys-246 (N6-AMP-lysine intermediate) is an active-site residue. ATP is bound by residues Arg-251, Arg-266, Glu-295, Phe-334, Arg-405, and Lys-411.

It belongs to the ATP-dependent DNA ligase family. Requires Mg(2+) as cofactor.

It carries out the reaction ATP + (deoxyribonucleotide)n-3'-hydroxyl + 5'-phospho-(deoxyribonucleotide)m = (deoxyribonucleotide)n+m + AMP + diphosphate.. In terms of biological role, DNA ligase that seals nicks in double-stranded DNA during DNA replication, DNA recombination and DNA repair. The chain is DNA ligase from Methanospirillum hungatei JF-1 (strain ATCC 27890 / DSM 864 / NBRC 100397 / JF-1).